Reading from the N-terminus, the 132-residue chain is Small ribosomal subunit protein uS8 (132 aa).

The protein belongs to the universal ribosomal protein uS8 family. In terms of assembly, part of the 30S ribosomal subunit. Contacts proteins S5 and S12.

In terms of biological role, one of the primary rRNA binding proteins, it binds directly to 16S rRNA central domain where it helps coordinate assembly of the platform of the 30S subunit. The polypeptide is Small ribosomal subunit protein uS8 (Flavobacterium johnsoniae (strain ATCC 17061 / DSM 2064 / JCM 8514 / BCRC 14874 / CCUG 350202 / NBRC 14942 / NCIMB 11054 / UW101) (Cytophaga johnsonae)).